A 1196-amino-acid chain; its full sequence is Major DNA-binding protein (1196 aa).

The segment at 499–512 (CNLCTFDTRHACVH) is a zinc-finger region. 2 short sequence motifs (required for filament formation) span residues 843-844 (FW) and 1142-1144 (FNF). The segment at 1158 to 1196 (GGPGAPGPAFAGRKRAFHGDDPFGEGPPDKKGDLTLDML) is disordered. Positions 1170 to 1196 (RKRAFHGDDPFGEGPPDKKGDLTLDML) are required for nuclear localization. Residues 1174–1196 (FHGDDPFGEGPPDKKGDLTLDML) are compositionally biased toward basic and acidic residues.

It belongs to the herpesviridae major DNA-binding protein family. In terms of assembly, homooligomers. Forms double-helical filaments necessary for the formation of replication compartments within the host nucleus. Interacts with the origin-binding protein. Interacts with the helicase primase complex; this interaction stimulates primer synthesis activity of the helicase-primase complex. Interacts with the DNA polymerase. Interacts with the alkaline exonuclease; this interaction increases its nuclease processivity.

The protein resides in the host nucleus. In terms of biological role, plays several crucial roles in viral infection. Participates in the opening of the viral DNA origin to initiate replication by interacting with the origin-binding protein. May disrupt loops, hairpins and other secondary structures present on ssDNA to reduce and eliminate pausing of viral DNA polymerase at specific sites during elongation. Promotes viral DNA recombination by performing strand-transfer, characterized by the ability to transfer a DNA strand from a linear duplex to a complementary single-stranded DNA circle. Can also catalyze the renaturation of complementary single strands. Additionally, reorganizes the host cell nucleus, leading to the formation of prereplicative sites and replication compartments. This process is driven by the protein which can form double-helical filaments in the absence of DNA. The sequence is that of Major DNA-binding protein from Homo sapiens (Human).